A 337-amino-acid polypeptide reads, in one-letter code: 6-phosphogluconolactonase (337 aa).

Belongs to the cycloisomerase 2 family.

It carries out the reaction 6-phospho-D-glucono-1,5-lactone + H2O = 6-phospho-D-gluconate + H(+). It functions in the pathway carbohydrate degradation; pentose phosphate pathway; D-ribulose 5-phosphate from D-glucose 6-phosphate (oxidative stage): step 2/3. In terms of biological role, catalyzes the hydrolysis of 6-phosphogluconolactone to 6-phosphogluconate. The sequence is that of 6-phosphogluconolactonase from Blochmanniella pennsylvanica (strain BPEN).